Here is a 130-residue protein sequence, read N- to C-terminus: Small ribosomal subunit protein uS9 (130 aa).

Residues 109 to 130 (RMKERKKYGLKGARRAPQFSKR) are disordered. Residues 111–130 (KERKKYGLKGARRAPQFSKR) show a composition bias toward basic residues.

The protein belongs to the universal ribosomal protein uS9 family.

The protein is Small ribosomal subunit protein uS9 of Listeria innocua serovar 6a (strain ATCC BAA-680 / CLIP 11262).